Here is a 174-residue protein sequence, read N- to C-terminus: Squamosa promoter-binding-like protein 4 (174 aa).

A disordered region spans residues 1 to 42 (MEGKRSQGQGYMKKKSYLVEEDMETDTDEEEEVGRDRVRGSR). Residues 19 to 33 (VEEDMETDTDEEEEV) show a composition bias toward acidic residues. An SBP-type zinc finger spans residues 51–128 (LRLCQVDRCT…AGHNERRRKS (78 aa)). Zn(2+) contacts are provided by Cys54, Cys59, Cys76, His79, Cys95, Cys98, His102, and Cys114. Residues 111–127 (KRSCRRRLAGHNERRRK) carry the Bipartite nuclear localization signal motif. Residues 118–127 (LAGHNERRRK) are compositionally biased toward basic residues. Disordered stretches follow at residues 118–148 (LAGH…GQVV) and 155–174 (SRVE…PQIR). Residues 163 to 174 (MPNSSFKRPQIR) show a composition bias toward polar residues.

It depends on Zn(2+) as a cofactor. Expressed in the rib meristem and inter-primordial tissue of the inflorescence apex.

Its subcellular location is the nucleus. The protein localises to the cytoplasm. In terms of biological role, trans-acting factor that binds specifically to the consensus nucleotide sequence 5'-TNCGTACAA-3' of AP1 promoter. Promotes both vegetative phase change and flowering. This chain is Squamosa promoter-binding-like protein 4 (SPL4), found in Arabidopsis thaliana (Mouse-ear cress).